The sequence spans 170 residues: MKFKKTIGAMALTTMFVAVSASAVEKNITVTASVDPAIDLLQADGNALPSAVKLAYSPASKTFESYRVMTQVHTNDATKKVIVKLADTPQLTDVLNSTVQMPISVSWGGQVLSTTAKEFEAAALGYSASGVNGVSSSQELVISAAPKTAGTAPTAGNYSGVVSLVMTLGS.

A signal peptide spans 1–23 (MKFKKTIGAMALTTMFVAVSASA).

This sequence belongs to the fimbrial CS1 protein family. CFA/I fimbriae are rather rigid, thread-like filaments of 0.5-1 micrometer, with an apparent axial hole, and a diameter of 7 nanometers. A single CFA/I fimbria consists of about 100 identical protein subunits.

The protein resides in the fimbrium. Functionally, fimbriae (also called pili), polar filaments radiating from the surface of the bacterium to a length of 0.5-1.5 micrometers and numbering 100-300 per cell, enable bacteria to colonize the epithelium of specific host organs. This is CFA/I fimbrial subunit B (cfaB) from Escherichia coli.